Here is a 321-residue protein sequence, read N- to C-terminus: uncharacterized protein (321 aa).

The segment at 280–306 (NSDHINNENNTNSNNDDNSNNSNNNNE) is disordered. The segment covering 286–306 (NENNTNSNNDDNSNNSNNNNE) has biased composition (low complexity).

This is an uncharacterized protein from Dictyostelium discoideum (Social amoeba).